Here is a 460-residue protein sequence, read N- to C-terminus: Probable Xaa-Pro aminopeptidase PEPP (460 aa).

Positions 256, 267, 390, and 430 each coordinate Mn(2+).

It belongs to the peptidase M24B family. Mn(2+) serves as cofactor.

It catalyses the reaction Release of any N-terminal amino acid, including proline, that is linked to proline, even from a dipeptide or tripeptide.. In terms of biological role, catalyzes the removal of a penultimate prolyl residue from the N-termini of peptides. The protein is Probable Xaa-Pro aminopeptidase PEPP (PEPP) of Podospora anserina (strain S / ATCC MYA-4624 / DSM 980 / FGSC 10383) (Pleurage anserina).